The sequence spans 134 residues: Large ribosomal subunit protein uL16c (134 aa).

A disordered region spans residues 1 to 21 (MLSPKRTKYRKHHRGRMRGKA).

Belongs to the universal ribosomal protein uL16 family. Part of the 50S ribosomal subunit.

It is found in the plastid. Its subcellular location is the chloroplast. This Chlorella vulgaris (Green alga) protein is Large ribosomal subunit protein uL16c.